A 456-amino-acid chain; its full sequence is Maturase-like protein 1 (456 aa).

It to group II intron maturases.

It is found in the plastid. Functionally, could be required for group III intron excision. The sequence is that of Maturase-like protein 1 (mat1) from Euglena longa (Euglenophycean alga).